The following is a 191-amino-acid chain: MDVILLERINKLGQMGETVKVRDGYARNFLLPQGKALRANAANKTRFETERATLEARNLERKSEAQTVAEALAGKSFIVVRSAGETGQLYGSVAARDVVEILGAEGFNIGRNQVELNTPIKTIGLHNVTLHLHAEVELQVELNVARSAEEAERQSKGESLTSADAIYGVDEDALRPEDFFDPEADGNEDDE.

The tract at residues 149-191 (EEAERQSKGESLTSADAIYGVDEDALRPEDFFDPEADGNEDDE) is disordered. A compositionally biased stretch (acidic residues) spans 179–191 (FFDPEADGNEDDE).

It belongs to the bacterial ribosomal protein bL9 family.

In terms of biological role, binds to the 23S rRNA. In Agrobacterium fabrum (strain C58 / ATCC 33970) (Agrobacterium tumefaciens (strain C58)), this protein is Large ribosomal subunit protein bL9 (rplI).